The sequence spans 205 residues: dTTP/UTP pyrophosphatase (205 aa).

The Proton acceptor role is filled by D66.

Belongs to the Maf family. YhdE subfamily. It depends on a divalent metal cation as a cofactor.

The protein localises to the cytoplasm. The enzyme catalyses dTTP + H2O = dTMP + diphosphate + H(+). It carries out the reaction UTP + H2O = UMP + diphosphate + H(+). Its function is as follows. Nucleoside triphosphate pyrophosphatase that hydrolyzes dTTP and UTP. May have a dual role in cell division arrest and in preventing the incorporation of modified nucleotides into cellular nucleic acids. This Anaeromyxobacter sp. (strain Fw109-5) protein is dTTP/UTP pyrophosphatase.